We begin with the raw amino-acid sequence, 450 residues long: MQFTHLVALALALATSEAAHQGFNYGNTKSDGSAKSQADFQAEFSTAKNLVGTSGFTSARLYTMIQGGTANTPISAIPAAITEQTSLLLGLWASGGNFANEIAALKAAIAQYGDDLAKLVVGISVGSEDLYRNSVDGVKANAGIGTNPDEIVSYINEVRSTIAGTKLSGAPIGHVDTWTAWVNGSNSAVIDACDWLGFDGYPYFQNTMANSISDAKALFDESVAKTQAVAKGKEVWITETGWPVSGKTENLAVANLANAKTYWDEVGCPLFGKTNTWWYILQDADPVTPNPSFGIVGSTLSTTPLFDLSCSASSSSSAAASSTAGPSASSVIGGKASGFTTAAANSAKPTFTVGKGPGGSYNGTGFWNSTSSARPSSSAISGSSSGSAAGSSGSSGSSGSGASGASGQSSSSTGSSSAPSTSNILSNAASGLSGSICGAVVAVCLALAAL.

The first 18 residues, methionine 1–alanine 18, serve as a signal peptide directing secretion. Glutamate 128 acts as the Proton donor in catalysis. N-linked (GlcNAc...) asparagine glycosylation is present at asparagine 183. Glutamate 239 serves as the catalytic Nucleophile. N-linked (GlcNAc...) asparagine glycans are attached at residues asparagine 362 and asparagine 368. 2 stretches are compositionally biased toward low complexity: residues serine 377 to serine 395 and alanine 405 to serine 420. Positions serine 377–serine 420 are disordered. Asparagine 427 carries the GPI-anchor amidated asparagine lipid modification. Positions alanine 428 to leucine 450 are cleaved as a propeptide — removed in mature form.

This sequence belongs to the glycosyl hydrolase 17 family. In terms of processing, the GPI-anchor is attached to the protein in the endoplasmic reticulum and serves to target the protein to the cell surface. There, the glucosamine-inositol phospholipid moiety is cleaved off and the GPI-modified mannoprotein is covalently attached via its lipidless GPI glycan remnant to the 1,6-beta-glucan of the outer cell wall layer.

It is found in the cell membrane. It localises to the secreted. Its subcellular location is the cell wall. The catalysed reaction is Hydrolysis of (1-&gt;3)-beta-D-glucosidic linkages in (1-&gt;3)-beta-D-glucans.. In terms of biological role, glucanases play a role in cell expansion during growth, in cell-cell fusion during mating, and in spore release during sporulation. This enzyme may be involved in beta-glucan degradation and also function biosynthetically as a transglycosylase. The chain is Probable glucan endo-1,3-beta-glucosidase eglC (eglC) from Aspergillus fumigatus (strain CBS 144.89 / FGSC A1163 / CEA10) (Neosartorya fumigata).